Consider the following 323-residue polypeptide: o-succinylbenzoate synthase (323 aa).

Catalysis depends on lysine 134, which acts as the Proton donor. Positions 162, 191, and 214 each coordinate Mg(2+). The active-site Proton acceptor is the lysine 236.

This sequence belongs to the mandelate racemase/muconate lactonizing enzyme family. MenC type 1 subfamily. It depends on a divalent metal cation as a cofactor.

The catalysed reaction is (1R,6R)-6-hydroxy-2-succinyl-cyclohexa-2,4-diene-1-carboxylate = 2-succinylbenzoate + H2O. Its pathway is quinol/quinone metabolism; 1,4-dihydroxy-2-naphthoate biosynthesis; 1,4-dihydroxy-2-naphthoate from chorismate: step 4/7. It functions in the pathway quinol/quinone metabolism; menaquinone biosynthesis. Converts 2-succinyl-6-hydroxy-2,4-cyclohexadiene-1-carboxylate (SHCHC) to 2-succinylbenzoate (OSB). The sequence is that of o-succinylbenzoate synthase from Yersinia pseudotuberculosis serotype O:1b (strain IP 31758).